A 146-amino-acid chain; its full sequence is uncharacterized protein (146 aa).

This is an uncharacterized protein from Haemophilus influenzae (strain ATCC 51907 / DSM 11121 / KW20 / Rd).